The primary structure comprises 102 residues: Small ribosomal subunit protein uS10 (102 aa).

It belongs to the universal ribosomal protein uS10 family. In terms of assembly, part of the 30S ribosomal subunit.

Its function is as follows. Involved in the binding of tRNA to the ribosomes. This is Small ribosomal subunit protein uS10 from Citrifermentans bemidjiense (strain ATCC BAA-1014 / DSM 16622 / JCM 12645 / Bem) (Geobacter bemidjiensis).